A 432-amino-acid chain; its full sequence is Glutamyl-tRNA reductase (432 aa).

Residues 49 to 52, Ser101, 106 to 108, and Gln112 contribute to the substrate site; these read TCNR and EPQ. Cys50 (nucleophile) is an active-site residue. An NADP(+)-binding site is contributed by 181-186; it reads GAGETI. Residues 408–432 are disordered; it reads PEKPGYRHPPVATPIVRTDDANPAP.

It belongs to the glutamyl-tRNA reductase family. In terms of assembly, homodimer.

The catalysed reaction is (S)-4-amino-5-oxopentanoate + tRNA(Glu) + NADP(+) = L-glutamyl-tRNA(Glu) + NADPH + H(+). It functions in the pathway porphyrin-containing compound metabolism; protoporphyrin-IX biosynthesis; 5-aminolevulinate from L-glutamyl-tRNA(Glu): step 1/2. Catalyzes the NADPH-dependent reduction of glutamyl-tRNA(Glu) to glutamate 1-semialdehyde (GSA). In Xanthomonas campestris pv. campestris (strain B100), this protein is Glutamyl-tRNA reductase.